Reading from the N-terminus, the 688-residue chain is Elongation factor G (688 aa).

A tr-type G domain is found at 8-282; sequence EKFRNFGIMA…GVVDYLPSPL (275 aa). GTP contacts are provided by residues 17 to 24, 81 to 85, and 135 to 138; these read AHIDAGKT, DTPGH, and NKMD.

It belongs to the TRAFAC class translation factor GTPase superfamily. Classic translation factor GTPase family. EF-G/EF-2 subfamily.

Its subcellular location is the cytoplasm. Catalyzes the GTP-dependent ribosomal translocation step during translation elongation. During this step, the ribosome changes from the pre-translocational (PRE) to the post-translocational (POST) state as the newly formed A-site-bound peptidyl-tRNA and P-site-bound deacylated tRNA move to the P and E sites, respectively. Catalyzes the coordinated movement of the two tRNA molecules, the mRNA and conformational changes in the ribosome. In Clostridium perfringens (strain ATCC 13124 / DSM 756 / JCM 1290 / NCIMB 6125 / NCTC 8237 / Type A), this protein is Elongation factor G.